A 398-amino-acid chain; its full sequence is Ureide permease 2 (398 aa).

The Extracellular portion of the chain corresponds to 1-10 (MYLVESKGGA). A helical membrane pass occupies residues 11–31 (IACMLLALLSLGTWPAVLTLL). Residues 32–44 (ERRGRLPQHTYLD) are Cytoplasmic-facing. A helical transmembrane segment spans residues 45–65 (YSITNLLAAIIIAFTFGQIGS). The Extracellular portion of the chain corresponds to 66–81 (TKPDSPNFITQLAQDN). A helical membrane pass occupies residues 82 to 102 (WPSVMFAMAGGIVLSLGNLST). Over 103–104 (QY) the chain is Cytoplasmic. Residues 105 to 125 (AWALVGLSVTEVITSSITVVI) traverse the membrane as a helical segment. The Extracellular portion of the chain corresponds to 126–139 (GSTLNYFLDDKINK). Residues 140–160 (AEILFPGVACFLIAVCLGSAV) form a helical membrane-spanning segment. At 161-229 (HRSNADDNKA…RAIKVFGKRK (69 aa)) the chain is on the cytoplasmic side. A disordered region spans residues 176–200 (ETAKQEASGPSTEIGTNSSKDLETN). Positions 183-200 (SGPSTEIGTNSSKDLETN) are enriched in polar residues. An ATP-binding site is contributed by 221-228 (AIKVFGKR). Residues 230 to 250 (IIGLAITFFAGLCFSLFSPAF) traverse the membrane as a helical segment. Residues 251–272 (NLATNDQWNRLKQGVPKLVVYT) are Extracellular-facing. Residues 273–293 (AFFYFSVSCFIIALILNVVFL) traverse the membrane as a helical segment. The Cytoplasmic portion of the chain corresponds to 294-315 (YYPVLGLPKSSFKAYLNDWNGR). A helical transmembrane segment spans residues 316–336 (YWAFLAGFLCGFGNGLQFMGG). The Extracellular portion of the chain corresponds to 337–341 (QAAGY). A helical transmembrane segment spans residues 342–362 (AAADSVQALPLVSTFWGVVLF). At 363–371 (GEYRRSSRK) the chain is on the cytoplasmic side. The helical transmembrane segment at 372 to 392 (TYLLLFCMLFMFISAVAVLMA) threads the bilayer. The Extracellular segment spans residues 393–398 (SSGHRK).

It belongs to the plant ureide permease (TC 2.A.7.19) family. In terms of tissue distribution, expressed in root xylem, cotyledons and leaves. Expressed in leaf blades, petioles, trichomes, stems, flower stigma, the upper part of pedicels, sepals, and the top and bottom parts of carpels in siliques.

The protein resides in the membrane. Proton-coupled transporter that transports a wide spectrum of oxo derivatives of heterocyclic nitrogen compounds, including allantoin, uric acid and xanthine, but not adenine. Mediates high affinity transport of uracil and 5-fluorouracil (a toxic uracil analog). Mediates transport of free pyrimidines and may function during early seedling development in salvage pathways, by the utilization of pyrimidines from seed storage tissue. The polypeptide is Ureide permease 2 (Arabidopsis thaliana (Mouse-ear cress)).